The chain runs to 219 residues: Small ribosomal subunit protein uS2m (219 aa).

Belongs to the universal ribosomal protein uS2 family. In terms of assembly, component of the mitochondrial ribosome small subunit.

The protein localises to the mitochondrion. The chain is Small ribosomal subunit protein uS2m (RPS2) from Arabidopsis thaliana (Mouse-ear cress).